Here is a 306-residue protein sequence, read N- to C-terminus: Dihydroorotate dehydrogenase B (NAD(+)), catalytic subunit (306 aa).

FMN contacts are provided by residues Ser22 and 46–47; that span reads KT. Residues Lys46, 70 to 74, and Asn128 each bind substrate; that span reads NSIGL. Asn128 contributes to the FMN binding site. Residue Cys131 is the Nucleophile of the active site. Lys164 serves as a coordination point for FMN. 191-192 contacts substrate; that stretch reads NT. FMN contacts are provided by residues Gly216, 242–243, and 264–265; these read GG and GS.

Belongs to the dihydroorotate dehydrogenase family. Type 1 subfamily. Heterotetramer of 2 PyrK and 2 PyrD type B subunits. FMN is required as a cofactor.

Its subcellular location is the cytoplasm. The catalysed reaction is (S)-dihydroorotate + NAD(+) = orotate + NADH + H(+). It functions in the pathway pyrimidine metabolism; UMP biosynthesis via de novo pathway; orotate from (S)-dihydroorotate (NAD(+) route): step 1/1. Its function is as follows. Catalyzes the conversion of dihydroorotate to orotate with NAD(+) as electron acceptor. This is Dihydroorotate dehydrogenase B (NAD(+)), catalytic subunit (pyrD) from Endomicrobium trichonymphae.